Consider the following 385-residue polypeptide: Alkanesulfonate monooxygenase (385 aa).

Belongs to the SsuD family.

The catalysed reaction is an alkanesulfonate + FMNH2 + O2 = an aldehyde + FMN + sulfite + H2O + 2 H(+). Functionally, catalyzes the desulfonation of aliphatic sulfonates. The protein is Alkanesulfonate monooxygenase of Burkholderia pseudomallei (strain 1710b).